A 693-amino-acid chain; its full sequence is Phenoloxidase subunit 2 (693 aa).

A propeptide spanning residues 1 to 51 (MADVFESLELLFDRPNEPLITPKGENNSVFQLTEQFLTEDYANNGIELNNR) is cleaved from the precursor. N-linked (GlcNAc...) asparagine glycans are attached at residues Asn26 and Asn64. Cu cation is bound by residues His213, His217, and His243. The Proton acceptor role is filled by Glu351. Residues His366, His370, and His406 each contribute to the Cu cation site. Residues Asn462 and Asn494 are each glycosylated (N-linked (GlcNAc...) asparagine). 2 disulfide bridges follow: Cys583–Cys627 and Cys585–Cys634. N-linked (GlcNAc...) asparagine glycosylation occurs at Asn680.

As to quaternary structure, heterodimer. The cofactor is Cu(2+). In terms of processing, the N-terminus is blocked. Synthesized by hemocytes and released into the hemolymph plasma.

It is found in the secreted. The catalysed reaction is 2 L-dopa + O2 = 2 L-dopaquinone + 2 H2O. It catalyses the reaction L-tyrosine + O2 = L-dopaquinone + H2O. In terms of biological role, this is a copper-containing oxidase that functions in the formation of pigments such as melanins and other polyphenolic compounds. Catalyzes the rate-limiting conversions of tyrosine to DOPA, DOPA to DOPA-quinone and possibly 5,6 dihydroxyindole to indole-5'6 quinone. In Bombyx mori (Silk moth), this protein is Phenoloxidase subunit 2.